Here is a 269-residue protein sequence, read N- to C-terminus: Energy-coupling factor transporter ATP-binding protein EcfA1 (269 aa).

An ABC transporter domain is found at 8–242; that stretch reads IVFKNVSFQY…AEELTTIGLD (235 aa). Residue 42–49 coordinates ATP; the sequence is GHNGSGKS.

This sequence belongs to the ABC transporter superfamily. Energy-coupling factor EcfA family. As to quaternary structure, forms a stable energy-coupling factor (ECF) transporter complex composed of 2 membrane-embedded substrate-binding proteins (S component), 2 ATP-binding proteins (A component) and 2 transmembrane proteins (T component).

It is found in the cell membrane. In terms of biological role, ATP-binding (A) component of a common energy-coupling factor (ECF) ABC-transporter complex. Unlike classic ABC transporters this ECF transporter provides the energy necessary to transport a number of different substrates. In Staphylococcus aureus (strain MRSA252), this protein is Energy-coupling factor transporter ATP-binding protein EcfA1.